The primary structure comprises 183 residues: Holliday junction branch migration complex subunit RuvA (183 aa).

Residues 1–63 (MIVGLIGVVE…EDAHLLYGFL (63 aa)) form a domain I region. The segment at 64–139 (EESEKILFER…FFIQDENRPA (76 aa)) is domain II. Alanine 139 is a region of interest (flexible linker). Residues 139 to 183 (ARNEVFLALESLGFKSAEINPVLKTLKPHLSIEAAIKEALQQLRS) form a domain III region.

The protein belongs to the RuvA family. Homotetramer. Forms an RuvA(8)-RuvB(12)-Holliday junction (HJ) complex. HJ DNA is sandwiched between 2 RuvA tetramers; dsDNA enters through RuvA and exits via RuvB. An RuvB hexamer assembles on each DNA strand where it exits the tetramer. Each RuvB hexamer is contacted by two RuvA subunits (via domain III) on 2 adjacent RuvB subunits; this complex drives branch migration. In the full resolvosome a probable DNA-RuvA(4)-RuvB(12)-RuvC(2) complex forms which resolves the HJ.

It is found in the cytoplasm. The RuvA-RuvB-RuvC complex processes Holliday junction (HJ) DNA during genetic recombination and DNA repair, while the RuvA-RuvB complex plays an important role in the rescue of blocked DNA replication forks via replication fork reversal (RFR). RuvA specifically binds to HJ cruciform DNA, conferring on it an open structure. The RuvB hexamer acts as an ATP-dependent pump, pulling dsDNA into and through the RuvAB complex. HJ branch migration allows RuvC to scan DNA until it finds its consensus sequence, where it cleaves and resolves the cruciform DNA. The sequence is that of Holliday junction branch migration complex subunit RuvA from Helicobacter pylori (strain J99 / ATCC 700824) (Campylobacter pylori J99).